We begin with the raw amino-acid sequence, 327 residues long: Polyadenylate-binding protein-interacting protein 9 (327 aa).

The PAM2-like motif lies at 59–69 (KLNPLAKEFFP). Positions 97–113 (KQSGEEFDLDAKKDDNT) are enriched in basic and acidic residues. Residues 97–132 (KQSGEEFDLDAKKDDNTRKRRNYSQGRRRLTGRISK) form a disordered region. The Bipartite nuclear localization signal motif lies at 114-125 (RKRRNYSQGRRR). Over residues 114–127 (RKRRNYSQGRRRLT) the composition is skewed to basic residues. RRM domains are found at residues 141-216 (RTVY…PSKT) and 238-314 (RTIY…PSKT). Residues 308 to 327 (RVSPSKTPVRPRITRPPSTN) are disordered.

It is found in the nucleus. The polypeptide is Polyadenylate-binding protein-interacting protein 9 (CID9) (Arabidopsis thaliana (Mouse-ear cress)).